The primary structure comprises 538 residues: Putative cysteine ligase BshC (538 aa).

Residues 460 to 483 are a coiled coil; the sequence is KINEQIELLEKMLKRNVEKKHEVQ.

The protein belongs to the BshC family.

Functionally, involved in bacillithiol (BSH) biosynthesis. May catalyze the last step of the pathway, the addition of cysteine to glucosamine malate (GlcN-Mal) to generate BSH. In Bacillus mycoides (strain KBAB4) (Bacillus weihenstephanensis), this protein is Putative cysteine ligase BshC.